The primary structure comprises 632 residues: tRNA uridine 5-carboxymethylaminomethyl modification enzyme MnmG (632 aa).

Residues 13–18, V125, and S180 each bind FAD; that span reads GGGHAG. 273–287 contributes to the NAD(+) binding site; the sequence is GPRYCPSIEDKVMRF. Residue Q370 coordinates FAD.

Belongs to the MnmG family. Homodimer. Heterotetramer of two MnmE and two MnmG subunits. It depends on FAD as a cofactor.

It is found in the cytoplasm. Functionally, NAD-binding protein involved in the addition of a carboxymethylaminomethyl (cmnm) group at the wobble position (U34) of certain tRNAs, forming tRNA-cmnm(5)s(2)U34. This chain is tRNA uridine 5-carboxymethylaminomethyl modification enzyme MnmG, found in Vibrio vulnificus (strain YJ016).